Reading from the N-terminus, the 607-residue chain is MERRDRMRISTAQKFGWGSQAQTGRRFVLRIFMVILSLEKLRQGSLLCMTPSHGNAHSSAHRAMSSTKPPTTTNKRKRTSNAHDEAPAKRVPEASSSKVTLDDSQPAPATSSDAVLGARSAPGTDYERVPFSTLNLSPPTTAAIERMGFETMTEVQARTIPPLLAGKDVLGAARTGSGKTMAFLIPSVELLSTLRFKPVNGTGVIIISPTRELALQIFGVAKELMQGHSQTFGVLMGGANRKAEADKLVKGVNLIVATPGRLLDHLQNTKGFVFKNLKALVIDEADRILEIGFEEEMKQIIKLLPSENRQSMLFSATQTTKVTDLARISLRPGPLYINVDETKEASTADMLEQGYVVCESDQRFMLLFTFLKKNLKKKVIVFFSSCNSVKYHAELLNYIDVPVLDLHGKQKQQKRTNTFFEFINAPAGILLCTDVAARGLDIPKVDWIIQFDPPDDPRDYIHRVGRTARAGKSGKSLLFLLPSELGFLRFLKVAKVPLNEYQFPQKKVADVQKQLESLISKNHYLNTSARDGYRSYLQAYASYSLKKIFDVNKLDLAKVGKAFGFAVPPKVNISVGSVKAKKSRDEDESSDDDGQPKKAYYRNRGRK.

A disordered region spans residues 52 to 121 (SHGNAHSSAH…SDAVLGARSA (70 aa)). Positions 81–92 (NAHDEAPAKRVP) are enriched in basic and acidic residues. The span at 94–113 (ASSSKVTLDDSQPAPATSSD) shows a compositional bias: polar residues. Positions 129–157 (VPFSTLNLSPPTTAAIERMGFETMTEVQA) match the Q motif motif. A Helicase ATP-binding domain is found at 160-336 (IPPLLAGKDV…RISLRPGPLY (177 aa)). 173-180 (ARTGSGKT) contacts ATP. The DEAD box motif lies at 283 to 286 (DEAD). Positions 350–519 (MLEQGYVVCE…DVQKQLESLI (170 aa)) constitute a Helicase C-terminal domain. The Bipartite nuclear localization signal motif lies at 362 to 378 (QRFMLLFTFLKKNLKKK). The segment at 576-607 (GSVKAKKSRDEDESSDDDGQPKKAYYRNRGRK) is disordered.

The protein belongs to the DEAD box helicase family. DDX18/HAS1 subfamily. Associates in the nucleolus with the 60S and pre-60S ribosomal subunits.

Its subcellular location is the nucleus. It localises to the nucleolus. The enzyme catalyses ATP + H2O = ADP + phosphate + H(+). In terms of biological role, ATP-dependent RNA helicase involved in 40S ribosomal subunit biogenesis. Required for the processing and cleavage of 35S pre-rRNA at sites A0, A1, and A2, leading to mature 18S rRNA. This is ATP-dependent RNA helicase HAS1 (HAS1) from Cryptococcus neoformans var. neoformans serotype D (strain B-3501A) (Filobasidiella neoformans).